Reading from the N-terminus, the 304-residue chain is Dermonecrotic toxin LlSicTox-betaIA1 (304 aa).

A signal peptide spans 1–21; it reads MLLSAVISFIGFAAFLQEANG. Positions 22–26 are excised as a propeptide; the sequence is HVVER. His-38 is a catalytic residue. Mg(2+) contacts are provided by Glu-58 and Asp-60. The active-site Nucleophile is His-74. 2 disulfides stabilise this stretch: Cys-78–Cys-84 and Cys-80–Cys-223. Position 118 (Asp-118) interacts with Mg(2+).

Belongs to the arthropod phospholipase D family. Class II subfamily. Class IIb sub-subfamily. It depends on Mg(2+) as a cofactor. In terms of tissue distribution, expressed by the venom gland.

The protein localises to the secreted. It catalyses the reaction an N-(acyl)-sphingosylphosphocholine = an N-(acyl)-sphingosyl-1,3-cyclic phosphate + choline. The catalysed reaction is an N-(acyl)-sphingosylphosphoethanolamine = an N-(acyl)-sphingosyl-1,3-cyclic phosphate + ethanolamine. It carries out the reaction a 1-acyl-sn-glycero-3-phosphocholine = a 1-acyl-sn-glycero-2,3-cyclic phosphate + choline. The enzyme catalyses a 1-acyl-sn-glycero-3-phosphoethanolamine = a 1-acyl-sn-glycero-2,3-cyclic phosphate + ethanolamine. In terms of biological role, dermonecrotic toxins cleave the phosphodiester linkage between the phosphate and headgroup of certain phospholipids (sphingolipid and lysolipid substrates), forming an alcohol (often choline) and a cyclic phosphate. This toxin acts on sphingomyelin (SM) with low activity. It may also act on ceramide phosphoethanolamine (CPE), lysophosphatidylcholine (LPC) and lysophosphatidylethanolamine (LPE), but not on lysophosphatidylserine (LPS), and lysophosphatidylglycerol (LPG). It acts by transphosphatidylation, releasing exclusively cyclic phosphate products as second products. Induces hemolysis, dermonecrosis, and edema. Also induces platelet aggregation. In Loxosceles laeta (South American recluse spider), this protein is Dermonecrotic toxin LlSicTox-betaIA1.